Reading from the N-terminus, the 271-residue chain is Pyridoxine kinase (271 aa).

Residue Asn141 coordinates ATP. Glu144 contributes to the Mg(2+) binding site. Residues 178–182 (TGGGK), Asp190, Ile206, Gly215, and Lys240 contribute to the ATP site.

Belongs to the ThiD family. As to quaternary structure, homodimer.

It carries out the reaction pyridoxal + ATP = pyridoxal 5'-phosphate + ADP + H(+). Phosphorylates B6 vitamers; functions in a salvage pathway. Uses pyridoxal, pyridoxine, and pyridoxamine as substrates. Can also use hydroxymethylpyrimidine (HMP) as substrate. In Bacillus subtilis (strain 168), this protein is Pyridoxine kinase (pdxK).